A 68-amino-acid chain; its full sequence is Large ribosomal subunit protein uL29 (68 aa).

The protein belongs to the universal ribosomal protein uL29 family.

In Wigglesworthia glossinidia brevipalpis, this protein is Large ribosomal subunit protein uL29.